We begin with the raw amino-acid sequence, 862 residues long: MAQPGPAPQPDVSLQQRVAELEKINAEFLRAQQQLEQEFNQKRAKFKELYLAKEEDLKRQNAVLQAAQDDLGHLRTQLWEAQAEMENIKAIATVSENTKQEAIDEVKRQWREEVASLQAIMKETVRDYEHQFHLRLEQERAQWAQYRESAEREIADLRRRLSEGQEEENLENEMKKAQEDAEKLRSVVMPMEKEIAALKDKLTEAEDKIKELEASKVKELNHYLEAEKSCRTDLEMYVAVLNTQKSVLQEDAEKLRKELHEVCHLLEQERQQHNQLKHTWQKANDQFLESQRLLMRDMQRMEIVLTSEQLRQVEELKKKDQEEDEQQRVNKRKDNKKTDTEEEVKIPVVCALTQEESSTPLSNEEEHLDSTHGSVHSLDADLMLPSGDPFSKSDNDMFKDGLRRAQSTDSLGTSSSLQSKALGYNYKAKSAGNLDESDFGPLVGADSVSENFDTVSLGSLQMPSGFMLTKDQERAIKAMTPEQEETASLLSSVTQGMESAYVSPSGYRLVSETEWNLLQKEVHNAGNKLGRRCDMCSNYEKQLQGIQIQEAETRDQVKKLQLMLRQANDQLEKTMKEKQELEDFLKQSAEDSSHQISALVLRAQASEVLLEELQQSFSQAKRDVQEQMAVLMQSREQVSEELVRLQKDNDSLQGKHSLHVSLQLAEDFILPDTVEVLRELVLKYRENIVHVRTAADHMEEKLKAEILFLKEQIQAEQCLKENLEETLQLEIENCKEEIASISSLKAELERIKVEKGQLESTLREKSQQLESLQEMKVNLEEQLKKETAAKATVEQLMFEEKNKAQRLQTELDVSEQVQRDFVKLSQTLQVQLERIRQADSLERIRAILNDTKLTDINQLPET.

Residue A2 is modified to N-acetylalanine. Residues 11–345 (DVSLQQRVAE…KKTDTEEEVK (335 aa)) are a coiled coil. Position 282 is an N6-acetyllysine (K282). Positions 315 to 374 (ELKKKDQEEDEQQRVNKRKDNKKTDTEEEVKIPVVCALTQEESSTPLSNEEEHLDSTHGS) are disordered. A compositionally biased stretch (basic and acidic residues) spans 336 to 345 (KKTDTEEEVK). Phosphoserine is present on residues S374, S377, and S407. At T408 the chain carries Phosphothreonine. Position 410 is a phosphoserine (S410). Residues 534–816 (DMCSNYEKQL…LQTELDVSEQ (283 aa)) adopt a coiled-coil conformation.

Belongs to the rabaptin family. Heterodimer with RABGEF1. The heterodimer binds RAB4A and RAB5A that have been activated by GTP-binding. Interacts with TSC2. Interacts with GGA1 (via GAE domain), GGA2 (via GAE domain) and GGA3 (via GAE domain). Interacts with AP1G1 (via GAE domain). Interacts with AP1G2 (via GAE domain). Interacts with ECPAS. Interacts with KCNH1. Interacts with PKD1 (via C-terminal domain) and GGA1; the interactions recruit PKD1:PKD2 complex to GGA1 and ARL3 at trans-Golgi network. Interacts with KCNH1. In terms of processing, proteolytic cleavage by caspases in apoptotic cells causes loss of endosome fusion activity.

The protein resides in the cytoplasm. Its subcellular location is the early endosome. It localises to the recycling endosome. The protein localises to the cytoplasmic vesicle. Its function is as follows. Rab effector protein acting as linker between gamma-adaptin, RAB4A and RAB5A. Involved in endocytic membrane fusion and membrane trafficking of recycling endosomes. Involved in KCNH1 channels trafficking to and from the cell membrane. Stimulates RABGEF1 mediated nucleotide exchange on RAB5A. Mediates the traffic of PKD1:PKD2 complex from the endoplasmic reticulum through the Golgi to the cilium. The protein is Rab GTPase-binding effector protein 1 (Rabep1) of Mus musculus (Mouse).